The chain runs to 74 residues: Large ribosomal subunit protein bL31 (74 aa).

The protein belongs to the bacterial ribosomal protein bL31 family. Type A subfamily. In terms of assembly, part of the 50S ribosomal subunit.

In terms of biological role, binds the 23S rRNA. In Xanthobacter autotrophicus (strain ATCC BAA-1158 / Py2), this protein is Large ribosomal subunit protein bL31.